The sequence spans 141 residues: Hemoglobin subunit alpha (141 aa).

The segment at 1 to 22 (VLSEDDKNRVRTSVGKNPELPG) is disordered. Positions 1-141 (VLSEDDKNRV…VSEVLESKYR (141 aa)) constitute a Globin domain. His-58 provides a ligand contact to O2. His-87 serves as a coordination point for heme b.

Belongs to the globin family. As to quaternary structure, heterotetramer of two alpha chains and two beta chains. Red blood cells.

In terms of biological role, involved in oxygen transport from the lung to the various peripheral tissues. The polypeptide is Hemoglobin subunit alpha (HBA) (Vipera aspis (Aspic viper)).